The primary structure comprises 1194 residues: Phosphatidylinositol-3,5-bisphosphate 3-phosphatase MTMR3 (1194 aa).

Ser4 is modified (phosphoserine). Residues 151 to 572 (EHVTSRFKNE…RNLMLWSAVY (422 aa)) enclose the Myotubularin phosphatase domain. The a 1,2-diacyl-sn-glycero-3-phospho-(1D-myo-inositol-3,5-bisphosphate) site is built by Asn322, Asn347, and Ile348. The a 1,2-diacyl-sn-glycero-3-phospho-(1D-myo-inositol-3-phosphate) site is built by Asn322, Asn347, and Ile348. Cys409 functions as the Phosphocysteine intermediate in the catalytic mechanism. Ser410, Asp411, Gly412, Trp413, Asp414, Arg415, Lys451, and Arg455 together coordinate a 1,2-diacyl-sn-glycero-3-phospho-(1D-myo-inositol-3,5-bisphosphate). Residues Ser410, Asp411, Gly412, Trp413, Asp414, and Arg415 each coordinate a 1,2-diacyl-sn-glycero-3-phospho-(1D-myo-inositol-3-phosphate). Arg455 provides a ligand contact to a 1,2-diacyl-sn-glycero-3-phospho-(1D-myo-inositol-3-phosphate). Positions 583 to 609 (DDSCAPYPAPGTSPDEPPLSRLPKTRS) are disordered. Positions 589–599 (YPAPGTSPDEP) are enriched in pro residues. Phosphoserine occurs at positions 609, 629, 643, and 647. Basic and acidic residues predominate over residues 693 to 724 (TKEESGVEEPTHREHTEVPEVKEEAPLAKESR). Disordered regions lie at residues 693 to 731 (TKEE…QGSG), 852 to 871 (ESGP…RFSG), and 876 to 897 (PIAP…HRTS). At Thr725 the chain carries Phosphothreonine. Ser904 is subject to Phosphoserine. Disordered regions lie at residues 932 to 971 (NKAS…HQLS) and 988 to 1017 (KWLN…DGMP). Residues 991-1006 (NSHSGRPSTTNSPEQP) show a composition bias toward polar residues. A coiled-coil region spans residues 1025–1058 (QRLRQIESGHQQEVETLKKQVQELKSRLESQYLT). Ser1060 is modified (phosphoserine). An FYVE-type zinc finger spans residues 1115-1175 (DHLAAHCYAC…VCKSCYSSLH (61 aa)). Residues Cys1121, Cys1124, Cys1137, Cys1140, Cys1145, Cys1148, Cys1167, and Cys1170 each contribute to the Zn(2+) site.

This sequence belongs to the protein-tyrosine phosphatase family. Non-receptor class myotubularin subfamily. In terms of assembly, forms heterodimers with MTMR4 that recruit both CEP55 and PLK1; occurs during early mitosis, regulates the phosphorylation of CEP55 by PLK1 and its recruitment to the midbody where it mediates cell abscission.

The protein localises to the cytoplasm. It localises to the cytosol. Its subcellular location is the membrane. It catalyses the reaction a 1,2-diacyl-sn-glycero-3-phospho-(1D-myo-inositol-3,5-bisphosphate) + H2O = a 1,2-diacyl-sn-glycero-3-phospho-(1D-myo-inositol-5-phosphate) + phosphate. It carries out the reaction a 1,2-diacyl-sn-glycero-3-phospho-(1D-myo-inositol-3-phosphate) + H2O = a 1,2-diacyl-sn-glycero-3-phospho-(1D-myo-inositol) + phosphate. The enzyme catalyses 1,2-dihexadecanoyl-sn-glycero-3-phospho-(1D-myo-inositol-3-phosphate) + H2O = 1,2-dihexadecanoyl-sn-glycero-3-phospho-(1D-myo-inositol) + phosphate. The catalysed reaction is 1,2-dioctanoyl-sn-glycero-3-phospho-(1-D-myo-inositol-3-phosphate) + H2O = 1,2-dioctanoyl-sn-glycero-3-phospho-(1D-myo-inositol) + phosphate. It catalyses the reaction 1,2-dihexadecanoyl-sn-glycero-3-phospho-(1D-myo-inositol-3,5-phosphate) + H2O = 1,2-dihexadecanoyl-sn-glycero-3-phospho-(1D-myo-inositol-5-phosphate) + phosphate. Lipid phosphatase that specifically dephosphorylates the D-3 position of phosphatidylinositol 3-phosphate and phosphatidylinositol 3,5-bisphosphate, generating phosphatidylinositol and phosphatidylinositol 5-phosphate. Decreases the levels of phosphatidylinositol 3-phosphate, a phospholipid found in cell membranes where it acts as key regulator of both cell signaling and intracellular membrane traffic. Could also have a molecular sequestering/adapter activity and regulate biological processes independently of its phosphatase activity. It includes the regulation of midbody abscission during mitotic cytokinesis. The polypeptide is Phosphatidylinositol-3,5-bisphosphate 3-phosphatase MTMR3 (Rattus norvegicus (Rat)).